The sequence spans 294 residues: Probable 2-(5''-triphosphoribosyl)-3'-dephosphocoenzyme-A synthase (294 aa).

It belongs to the CitG/MdcB family.

It carries out the reaction 3'-dephospho-CoA + ATP = 2'-(5''-triphospho-alpha-D-ribosyl)-3'-dephospho-CoA + adenine. This chain is Probable 2-(5''-triphosphoribosyl)-3'-dephosphocoenzyme-A synthase, found in Streptococcus pyogenes serotype M49 (strain NZ131).